The following is a 520-amino-acid chain: Cytochrome P450 4F2 (520 aa).

Positions 1–4 are excised as a propeptide; that stretch reads MSQL. Heme is bound by residues glutamate 328 and cysteine 468.

It belongs to the cytochrome P450 family. It depends on heme as a cofactor. As to expression, liver. Also present in kidney: specifically expressed in the S2 and S3 segments of proximal tubules in cortex and outer medulla.

Its subcellular location is the microsome membrane. The protein resides in the endoplasmic reticulum membrane. It catalyses the reaction an organic molecule + reduced [NADPH--hemoprotein reductase] + O2 = an alcohol + oxidized [NADPH--hemoprotein reductase] + H2O + H(+). The enzyme catalyses (5Z,8Z,11Z,14Z)-eicosatetraenoate + reduced [NADPH--hemoprotein reductase] + O2 = 20-hydroxy-(5Z,8Z,11Z,14Z)-eicosatetraenoate + oxidized [NADPH--hemoprotein reductase] + H2O + H(+). It carries out the reaction (5Z,8Z,11Z)-eicosatrienoate + reduced [NADPH--hemoprotein reductase] + O2 = 20-hydroxy-(5Z,8Z,11Z)-eicosatrienoate + oxidized [NADPH--hemoprotein reductase] + H2O + H(+). The catalysed reaction is (5Z,8Z,11Z,14Z,17Z)-eicosapentaenoate + reduced [NADPH--hemoprotein reductase] + O2 = 20-hydroxy-(5Z,8Z,11Z,14Z,17Z)-eicosapentaenoate + oxidized [NADPH--hemoprotein reductase] + H2O + H(+). It catalyses the reaction (4Z,7Z,10Z,13Z,16Z,19Z)-docosahexaenoate + reduced [NADPH--hemoprotein reductase] + O2 = 22-hydroxy-(4Z,7Z,10Z,13Z,16Z,19Z)-docosahexaenoate + oxidized [NADPH--hemoprotein reductase] + H2O + H(+). The enzyme catalyses 8,9-epoxy-(5Z,11Z,14Z)-eicosatrienoate + reduced [NADPH--hemoprotein reductase] + O2 = 20-hydroxy-8,9-epoxy-(5Z,11Z,14Z)-eicosatrienoate + oxidized [NADPH--hemoprotein reductase] + H2O + H(+). It carries out the reaction (9S,10R)-epoxy-octadecanoate + reduced [NADPH--hemoprotein reductase] + O2 = 18-hydroxy-(9S,10R)-epoxy-octadecanoate + oxidized [NADPH--hemoprotein reductase] + H2O + H(+). The catalysed reaction is (9R,10S)-epoxy-octadecanoate + reduced [NADPH--hemoprotein reductase] + O2 = 18-hydroxy-(9R,10S)-epoxy-octadecanoate + oxidized [NADPH--hemoprotein reductase] + H2O + H(+). It catalyses the reaction 12,13-epoxy-(9Z)-octadecenoate + reduced [NADPH--hemoprotein reductase] + O2 = 18-hydroxy-12,13-epoxy-(9Z)-octadecenoate + oxidized [NADPH--hemoprotein reductase] + H2O + H(+). The enzyme catalyses 9,10-epoxy-(12Z)-octadecenoate + reduced [NADPH--hemoprotein reductase] + O2 = 18-hydroxy-9,10-epoxy-(12Z)-octadecenoate + oxidized [NADPH--hemoprotein reductase] + H2O + H(+). It carries out the reaction 8-hydroxy-(5Z,9E,11Z,14Z)-eicosatetraenoate + reduced [NADPH--hemoprotein reductase] + O2 = 8,20-dihydroxy-(5Z,9E,11Z,14Z)-eicosatetraenoate + oxidized [NADPH--hemoprotein reductase] + H2O + H(+). The catalysed reaction is 12-hydroxy-(5Z,8Z,10E,14Z)-eicosatetraenoate + reduced [NADPH--hemoprotein reductase] + O2 = 12,20-dihydroxy-(5Z,8Z,10E,14Z)-eicosatetraenoate + oxidized [NADPH--hemoprotein reductase] + H2O + H(+). It catalyses the reaction 12-hydroxyoctadecanoate + reduced [NADPH--hemoprotein reductase] + O2 = 12,18-dihydroxyoctadecanoate + oxidized [NADPH--hemoprotein reductase] + H2O + H(+). The enzyme catalyses docosanoate + reduced [NADPH--hemoprotein reductase] + O2 = 22-hydroxydocosanoate + oxidized [NADPH--hemoprotein reductase] + H2O + H(+). It carries out the reaction 22-hydroxydocosanoate + reduced [NADPH--hemoprotein reductase] + O2 = 22-oxodocosanoate + oxidized [NADPH--hemoprotein reductase] + 2 H2O + H(+). The catalysed reaction is 22-oxodocosanoate + reduced [NADPH--hemoprotein reductase] + O2 = docosanedioate + oxidized [NADPH--hemoprotein reductase] + H2O + 2 H(+). It catalyses the reaction tetracosanoate + reduced [NADPH--hemoprotein reductase] + O2 = 24-hydroxytetracosanoate + oxidized [NADPH--hemoprotein reductase] + H2O + H(+). The enzyme catalyses hexacosanoate + reduced [NADPH--hemoprotein reductase] + O2 = 26-hydroxyhexacosanoate + oxidized [NADPH--hemoprotein reductase] + H2O + H(+). It carries out the reaction 26-hydroxyhexacosanoate + reduced [NADPH--hemoprotein reductase] + O2 = 26-oxohexacosanoate + oxidized [NADPH--hemoprotein reductase] + 2 H2O + H(+). The catalysed reaction is 26-oxohexacosanoate + reduced [NADPH--hemoprotein reductase] + O2 = hexacosanedioate + oxidized [NADPH--hemoprotein reductase] + H2O + 2 H(+). It catalyses the reaction 3-hydroxyoctadecanoate + reduced [NADPH--hemoprotein reductase] + O2 = 3,18-dihydroxyoctadecanoate + oxidized [NADPH--hemoprotein reductase] + H2O + H(+). The enzyme catalyses 3-hydroxyhexadecanoate + reduced [NADPH--hemoprotein reductase] + O2 = 3,16-dihydroxyhexadecanoate + oxidized [NADPH--hemoprotein reductase] + H2O + H(+). It carries out the reaction leukotriene B4 + reduced [NADPH--hemoprotein reductase] + O2 = 20-hydroxy-leukotriene B4 + oxidized [NADPH--hemoprotein reductase] + H2O + H(+). The catalysed reaction is 6-trans-leukotriene B4 + reduced [NADPH--hemoprotein reductase] + O2 = 20-hydroxy-6-trans-leukotriene B4 + oxidized [NADPH--hemoprotein reductase] + H2O + H(+). It catalyses the reaction lipoxin A4 + reduced [NADPH--hemoprotein reductase] + O2 = 20-hydroxy-lipoxin A4 + oxidized [NADPH--hemoprotein reductase] + H2O + H(+). The enzyme catalyses menaquinone-4 + reduced [NADPH--hemoprotein reductase] + O2 = omega-hydroxymenaquinone-4 + oxidized [NADPH--hemoprotein reductase] + H2O + H(+). It carries out the reaction phylloquinone + reduced [NADPH--hemoprotein reductase] + O2 = omega-hydroxyphylloquinone + oxidized [NADPH--hemoprotein reductase] + H2O + H(+). The catalysed reaction is (+)-alpha-tocopherol + reduced [NADPH--hemoprotein reductase] + O2 = 13-hydroxy-alpha-tocopherol + oxidized [NADPH--hemoprotein reductase] + H2O + H(+). It catalyses the reaction gamma-tocopherol + NADPH + O2 + H(+) = 13-hydroxy-gamma-tocopherol + NADP(+) + H2O. It participates in lipid metabolism; arachidonate metabolism. The protein operates within lipid metabolism; leukotriene B4 degradation. Its pathway is cofactor degradation; phylloquinone degradation. Inhibited by dietary sesamin. In terms of biological role, a cytochrome P450 monooxygenase involved in the metabolism of various endogenous substrates, including fatty acids, eicosanoids and vitamins. Mechanistically, uses molecular oxygen inserting one oxygen atom into a substrate, and reducing the second into a water molecule, with two electrons provided by NADPH via cytochrome P450 reductase (CPR; NADPH-ferrihemoprotein reductase). Catalyzes predominantly the oxidation of the terminal carbon (omega-oxidation) of long- and very long-chain fatty acids. Displays high omega-hydroxylase activity toward polyunsaturated fatty acids (PUFAs). Participates in the conversion of arachidonic acid to omega-hydroxyeicosatetraenoic acid (20-HETE), a signaling molecule acting both as vasoconstrictive and natriuretic with overall effect on arterial blood pressure. Plays a role in the oxidative inactivation of eicosanoids, including both pro-inflammatory and anti-inflammatory mediators such as leukotriene B4 (LTB4), lipoxin A4 (LXA4), and several HETEs. Catalyzes omega-hydroxylation of 3-hydroxy fatty acids. Converts monoepoxides of linoleic acid leukotoxin and isoleukotoxin to omega-hydroxylated metabolites. Contributes to the degradation of very long-chain fatty acids (VLCFAs) by catalyzing successive omega-oxidations and chain shortening. Plays an important role in vitamin metabolism by chain shortening. Catalyzes omega-hydroxylation of the phytyl chain of tocopherols (forms of vitamin E), with preference for gamma-tocopherols over alpha-tocopherols, thus promoting retention of alpha-tocopherols in tissues. Omega-hydroxylates and inactivates phylloquinone (vitamin K1), and menaquinone-4 (MK-4, a form of vitamin K2), both acting as cofactors in blood coagulation. The sequence is that of Cytochrome P450 4F2 from Homo sapiens (Human).